A 538-amino-acid chain; its full sequence is Chaperonin GroEL (538 aa).

ATP-binding positions include 30-33 (TLGP), 87-91 (DGTTT), Gly415, 479-481 (DAA), and Asp495.

Belongs to the chaperonin (HSP60) family. In terms of assembly, forms a cylinder of 14 subunits composed of two heptameric rings stacked back-to-back. Interacts with the co-chaperonin GroES.

It is found in the cytoplasm. The enzyme catalyses ATP + H2O + a folded polypeptide = ADP + phosphate + an unfolded polypeptide.. In terms of biological role, together with its co-chaperonin GroES, plays an essential role in assisting protein folding. The GroEL-GroES system forms a nano-cage that allows encapsulation of the non-native substrate proteins and provides a physical environment optimized to promote and accelerate protein folding. In Dictyoglomus thermophilum (strain ATCC 35947 / DSM 3960 / H-6-12), this protein is Chaperonin GroEL.